The following is a 187-amino-acid chain: UPF0232 protein MMAR_0004 (187 aa).

Disordered stretches follow at residues 1 to 77 (MSDD…QPLG) and 166 to 187 (ASPSWRKGPRHIAGRGPRDTYG). Positions 14-30 (AARDELSGMDLVRRTLA) are enriched in basic and acidic residues. The span at 31–55 (EARAAARARGQDPGRGFAAGPAPRR) shows a compositional bias: low complexity.

This sequence belongs to the UPF0232 family.

In Mycobacterium marinum (strain ATCC BAA-535 / M), this protein is UPF0232 protein MMAR_0004.